We begin with the raw amino-acid sequence, 163 residues long: MADARRAPLKDRTDVSGARALIVEARFYDDIQDALLEGAVAELSAAGVSYDVVTVPGALEIPAAIAIALDAAERSGKPYDAVVALGCVVRGDTIHFEIVSMESSRALMDLSVQRRVPLGNGIITVNTDAQAWARARASELNKGGDAARAALTMLRIKRRLAKA.

5-amino-6-(D-ribitylamino)uracil-binding positions include F27, 58–60 (ALE), and 87–89 (CVV). 92–93 (DT) contacts (2S)-2-hydroxy-3-oxobutyl phosphate. The active-site Proton donor is H95. N120 contributes to the 5-amino-6-(D-ribitylamino)uracil binding site. (2S)-2-hydroxy-3-oxobutyl phosphate is bound at residue R134.

Belongs to the DMRL synthase family.

It carries out the reaction (2S)-2-hydroxy-3-oxobutyl phosphate + 5-amino-6-(D-ribitylamino)uracil = 6,7-dimethyl-8-(1-D-ribityl)lumazine + phosphate + 2 H2O + H(+). It functions in the pathway cofactor biosynthesis; riboflavin biosynthesis; riboflavin from 2-hydroxy-3-oxobutyl phosphate and 5-amino-6-(D-ribitylamino)uracil: step 1/2. Catalyzes the formation of 6,7-dimethyl-8-ribityllumazine by condensation of 5-amino-6-(D-ribitylamino)uracil with 3,4-dihydroxy-2-butanone 4-phosphate. This is the penultimate step in the biosynthesis of riboflavin. In Nitrobacter hamburgensis (strain DSM 10229 / NCIMB 13809 / X14), this protein is 6,7-dimethyl-8-ribityllumazine synthase.